A 374-amino-acid chain; its full sequence is Chaperone protein DnaJ (374 aa).

In terms of domain architecture, J spans 5–70 (DFYEILGVGK…QKRDAYDRYG (66 aa)). Residues 29–50 (AMKHHPDRNPDSKGAEDKFKEA) form a disordered region. A compositionally biased stretch (basic and acidic residues) spans 35-50 (DRNPDSKGAEDKFKEA). The segment at 134–212 (GYDTTIRVPS…CSGAGKIKRN (79 aa)) adopts a CR-type zinc-finger fold. Zn(2+) is bound by residues Cys-147, Cys-150, Cys-164, Cys-167, Cys-186, Cys-189, Cys-200, and Cys-203. CXXCXGXG motif repeat units lie at residues 147–154 (CETCDGSG), 164–171 (CTTCGGHG), 186–193 (CPKCHGSG), and 200–207 (CGTCSGAG).

It belongs to the DnaJ family. Homodimer. The cofactor is Zn(2+).

It localises to the cytoplasm. Participates actively in the response to hyperosmotic and heat shock by preventing the aggregation of stress-denatured proteins and by disaggregating proteins, also in an autonomous, DnaK-independent fashion. Unfolded proteins bind initially to DnaJ; upon interaction with the DnaJ-bound protein, DnaK hydrolyzes its bound ATP, resulting in the formation of a stable complex. GrpE releases ADP from DnaK; ATP binding to DnaK triggers the release of the substrate protein, thus completing the reaction cycle. Several rounds of ATP-dependent interactions between DnaJ, DnaK and GrpE are required for fully efficient folding. Also involved, together with DnaK and GrpE, in the DNA replication of plasmids through activation of initiation proteins. This Janthinobacterium sp. (strain Marseille) (Minibacterium massiliensis) protein is Chaperone protein DnaJ.